Consider the following 856-residue polypeptide: Dynamin-1 (856 aa).

Positions 28 to 294 (DLDLPQIAVV…LTNHIRDTLP (267 aa)) constitute a Dynamin-type G domain. Residues 38 to 45 (GGQSAGKS) form a G1 motif region. Positions 41, 43, 44, 45, 46, 59, and 60 each coordinate GDP. The segment at 64–66 (VTR) is G2 motif. Tyrosine 80 is modified (phosphotyrosine). A 3'-nitrotyrosine; alternate modification is found at tyrosine 125. Tyrosine 125 carries the post-translational modification Phosphotyrosine; alternate. The segment at 136 to 139 (DLPG) is G3 motif. Residues 205–208 (TKLD) are G4 motif. Residues lysine 206, aspartate 208, aspartate 211, asparagine 236, arginine 237, and glutamine 239 each coordinate GDP. The interval 235–238 (VNRS) is G5 motif. 2 positions are modified to phosphoserine: serine 306 and serine 347. Tyrosine 354 is modified (phosphotyrosine). Serine 512 carries the phosphoserine modification. Positions 519-625 (LVIRKGWLTI…WKASFLRAGV (107 aa)) constitute a PH domain. Positions 659-750 (VETIRNLVDS…IIGDINTTTV (92 aa)) constitute a GED domain. Positions 750–856 (VSTPMPPPVD…PIGSGKSIPS (107 aa)) are disordered. Residues 763–781 (LQVQSVPTGRRSPTSSPTP) are compositionally biased toward polar residues. Phosphoserine occurs at positions 774 and 778. Arginine 796 carries the omega-N-methylarginine modification. Position 822 is a phosphoserine (serine 822). The segment covering 825 to 844 (PFGPPPQVPSRPNRAPPGVP) has biased composition (pro residues).

The protein belongs to the TRAFAC class dynamin-like GTPase superfamily. Dynamin/Fzo/YdjA family. As to quaternary structure, homodimer; homodimerization is mediated by the dynamin-type G domain which promotes assembly-stimulated GTPase activity. Homo-tetramer formed from two dimers in the absence of lipid. Oligomerizes into a helical polymer that self-assembles around the vesicle membrane, when associated to the menbrane through lipid binding. Interacts (via C-terminal proline-rich domain (PRD)) with SNX9 (via SH3 domain); this interaction allows regulation of DNM1 self-assembly during late stages of endocytic vesicle formation and supports DNM1's early functions in accelerating clathrin-coated pits (CCPs) maturation in non neuronals cell. Interacts (via C-terminal proline-rich domain (PRD)) with MYO1E (via SH3 domain); this interaction regulates receptor-mediated endocytosis. Interacts with SNX33 (via SH3 domain); this interaction decreases DNM1-dependent endocytosis. Interacts with DIAPH1. Interacts with GRB2 (via SH3 domain); this interaction mediates disassembly of DNM1 polymers, therefore modulates self-assembly. Forms a complex with BIN1 (via SH3 domain) and SH3GL2 (via SH3 domain). Forms a complex with SH3GL2 (via SH3 domain) and AMPH (via SH3 domain). Forms a complex with SH3GL2 (via SH3 domain) and SYNJ1. Interacts with AMPH. Interacts (via C-terminal proline-rich domain (PRD)) with SYT1; this interaction facilitates vesicle fission during clathrin-mediated endocytosis (CME). Interacts (via C-terminal proline-rich domain (PRD)) with PLCG1 (via SH3 domain); this interaction stimulates the release of GDP from DNM1 and enhances DNM1-dependent endocytosis. Interacts with SNPH; this interaction inhibits the binding of DNM1 to AMPH and DNM1-receptor-mediated endocytosis. Interacts with CAV1. Interacts with SH3GLB1 (via SH3 domain). Interacts with PACSIN1 (via SH3 domain), PACSIN2 (via SH3 domain) and PACSIN3 (via SH3 domain). Interacts with UNC119; this interaction decreases DNM1's GTPase activity and affects DNM1's interaction with AMPH. Interacts with AMPH. Interacts (GTP-bound form) with DNAJC6; this interaction allows clathrin-coated vesicle (CCV) formation at the plasma membrane. Post-translationally, phosphorylation at Ser-774 by GSK3B/GSK3-beta leads to inactivation of receptor-mediated endocytosis in non-neuronal cells. Dephosphorylation at Ser-774, through the EGFR downstream signaling, leads to activation and regulates early stages of clathrin-mediated endocytosis (CME).

It is found in the cell membrane. The protein resides in the membrane. Its subcellular location is the clathrin-coated pit. The protein localises to the cytoplasmic vesicle. It localises to the presynapse. It is found in the secretory vesicle. The protein resides in the chromaffin granule. The catalysed reaction is GTP + H2O = GDP + phosphate + H(+). Catalyzes the hydrolysis of GTP and utilizes this energy to mediate vesicle scission and participates in many forms of endocytosis, such as clathrin-mediated endocytosis or synaptic vesicle endocytosis as well as rapid endocytosis (RE). Associates to the membrane, through lipid binding, and self-assembles into rings and stacks of interconnected rings through oligomerization to form a helical polymer around the vesicle membrane leading to constriction of invaginated coated pits around their necks. Self-assembly of the helical polymer induces membrane tubules narrowing until the polymer reaches a length sufficient to trigger GTP hydrolysis. Depending on the curvature imposed on the tubules, membrane detachment from the helical polymer upon GTP hydrolysis can cause spontaneous hemifission followed by complete fission. May play a role in regulating early stages of clathrin-mediated endocytosis in non-neuronal cells through its activation by dephosphorylation via the signaling downstream of EGFR. Controls vesicle size at a step before fission, during formation of membrane pits, at hippocampal synapses. Controls plastic adaptation of the synaptic vesicle recycling machinery to high levels of activity. Mediates rapid endocytosis (RE), a Ca(2+)-dependent and clathrin- and K(+)-independent process in chromaffin cells. Microtubule-associated force-producing protein involved in producing microtubule bundles and able to bind and hydrolyze GTP. Through its interaction with DNAJC6, acts during the early steps of clathrin-coated vesicle (CCV) formation. The sequence is that of Dynamin-1 from Bos taurus (Bovine).